The primary structure comprises 719 residues: uncharacterized protein (719 aa).

Residues 64-100 (IQNLNQRKEEVIRLIAEQDKLTDNLKRKIEQSVKLQE) adopt a coiled-coil conformation. An S1 motif domain is found at 649–718 (GMELQGTVRN…QKGRVSLSMV (70 aa)).

This is an uncharacterized protein from Bacillus subtilis (strain 168).